A 341-amino-acid chain; its full sequence is Vacuolar morphogenesis protein 7 homolog (341 aa).

The region spanning 1-115 (MALKIKIPET…KFLNIKDESE (115 aa)) is the PX domain. The segment covering 214–233 (NSPVAPPSASSQLNSSNPSS) has biased composition (low complexity). Residues 214–265 (NSPVAPPSASSQLNSSNPSSPFRPLSASTDKQSNTSLNRVLGKNRMPETQTT) form a disordered region. Residues 239–251 (SASTDKQSNTSLN) are compositionally biased toward polar residues. One can recognise a t-SNARE coiled-coil homology domain in the interval 278–340 (NQTMEDQDMQ…HRTRAGLRKL (63 aa)).

In terms of assembly, possibly multimeric.

The protein localises to the vacuole. Functionally, essential for proper morphogenesis of the vacuole. May exist as structural reinforcement on the surface of the vacuolar membrane and be required for maintenance against rupture by osmotic pressure. This is Vacuolar morphogenesis protein 7 homolog from Schizosaccharomyces pombe (strain 972 / ATCC 24843) (Fission yeast).